We begin with the raw amino-acid sequence, 343 residues long: Heat-inducible transcription repressor HrcA (343 aa).

This sequence belongs to the HrcA family.

Negative regulator of class I heat shock genes (grpE-dnaK-dnaJ and groELS operons). Prevents heat-shock induction of these operons. The sequence is that of Heat-inducible transcription repressor HrcA from Bacillus pumilus (strain SAFR-032).